Here is a 622-residue protein sequence, read N- to C-terminus: Carbon monoxide dehydrogenase (622 aa).

Cys40, Cys49, Cys52, Cys57, and Cys68 together coordinate [4Fe-4S] cluster. His256, Cys334, Cys442, Cys473, and Cys514 together coordinate [Ni-4Fe-5S] cluster.

It belongs to the Ni-containing carbon monoxide dehydrogenase family. As to quaternary structure, homodimer. The cofactor is [4Fe-4S] cluster. It depends on [Ni-4Fe-5S] cluster as a cofactor.

It catalyses the reaction CO + 2 oxidized [2Fe-2S]-[ferredoxin] + H2O = 2 reduced [2Fe-2S]-[ferredoxin] + CO2 + 2 H(+). Functionally, CODH oxidizes carbon monoxide coupled, via CooF, to the reduction of a hydrogen cation by a hydrogenase (possibly CooH). The sequence is that of Carbon monoxide dehydrogenase (cooS) from Archaeoglobus fulgidus (strain ATCC 49558 / DSM 4304 / JCM 9628 / NBRC 100126 / VC-16).